We begin with the raw amino-acid sequence, 445 residues long: Mutanase Pc12g07500 (445 aa).

Positions 1–21 (MIWKSLFSALAILTHILPALT) are cleaved as a signal peptide. N-linked (GlcNAc...) asparagine glycans are attached at residues Asn-386 and Asn-437.

This sequence belongs to the glycosyl hydrolase 71 family. Monomer.

The protein resides in the secreted. It catalyses the reaction Endohydrolysis of (1-&gt;3)-alpha-D-glucosidic linkages in isolichenin, pseudonigeran and nigeran.. Functionally, hydrolyzes 1,3-alpha-glucan predominantly into pentasaccharides. May enhance the efficacy of fungal antibiotics by degrading bacterial exopolysaccharides. This chain is Mutanase Pc12g07500, found in Penicillium rubens (strain ATCC 28089 / DSM 1075 / NRRL 1951 / Wisconsin 54-1255) (Penicillium chrysogenum).